The primary structure comprises 488 residues: Envelope glycoprotein gp62 (488 aa).

A signal peptide spans 1-20 (MGKFLATLILFFQFCPLILG). The Extracellular portion of the chain corresponds to 21–442 (DYSPSCCTLT…LGLSQWAREA (422 aa)). N140 and N222 each carry an N-linked (GlcNAc...) asparagine; by host glycan. Positions 225 to 228 (CIVC) match the CXXC motif. 3 disulfides stabilise this stretch: C225-C228, C225-C401, and C393-C400. N244 and N272 each carry an N-linked (GlcNAc...) asparagine; by host glycan. The interval 313 to 333 (AVPVAVWLVSALAIGAGVAGG) is fusion peptide. Coiled-coil stretches lie at residues 341–387 (ASGK…LLFW) and 397–429 (QEQC…GWGL). The tract at residues 376-392 (AQNRRGLDLLFWEQGGL) is immunosuppression. Residues 393-401 (CKALQEQCC) carry the CX6CC motif. N-linked (GlcNAc...) asparagine; by host glycosylation occurs at N404. Residues 443–463 (LQTGITLVALLLLVILAGPCI) traverse the membrane as a helical segment. C462 carries the S-palmitoyl cysteine; by host lipid modification. Residues 464–488 (LRQLRHLPSRVRYPHYSLINPESSL) are Cytoplasmic-facing.

The mature envelope protein (Env) consists of a trimer of SU-TM heterodimers attached by a labile interchain disulfide bond. In terms of processing, specific enzymatic cleavages in vivo yield mature proteins. Envelope glycoproteins are synthesized as an inactive precursor that is N-glycosylated and processed likely by host cell furin or by a furin-like protease in the Golgi to yield the mature SU and TM proteins. The cleavage site between SU and TM requires the minimal sequence [KR]-X-[KR]-R. The CXXC motif is highly conserved across a broad range of retroviral envelope proteins. It is thought to participate in the formation of a labile disulfide bond possibly with the CX6CC motif present in the transmembrane protein. Isomerization of the intersubunit disulfide bond to an SU intrachain disulfide bond is thought to occur upon receptor recognition in order to allow membrane fusion. Post-translationally, the transmembrane protein is palmitoylated.

It is found in the virion membrane. Its subcellular location is the host cell membrane. Functionally, the surface protein (SU) attaches the virus to the host cell by binding to its receptor. This interaction triggers the refolding of the transmembrane protein (TM) and is thought to activate its fusogenic potential by unmasking its fusion peptide. Fusion occurs at the host cell plasma membrane. The transmembrane protein (TM) acts as a class I viral fusion protein. Under the current model, the protein has at least 3 conformational states: pre-fusion native state, pre-hairpin intermediate state, and post-fusion hairpin state. During viral and target cell membrane fusion, the coiled coil regions (heptad repeats) assume a trimer-of-hairpins structure, positioning the fusion peptide in close proximity to the C-terminal region of the ectodomain. The formation of this structure appears to drive apposition and subsequent fusion of viral and target cell membranes. Membranes fusion leads to delivery of the nucleocapsid into the cytoplasm. In Human T-cell leukemia virus 1 (isolate Caribbea CH subtype A) (HTLV-1), this protein is Envelope glycoprotein gp62 (env).